We begin with the raw amino-acid sequence, 67 residues long: Large ribosomal subunit protein uL29 (67 aa).

It belongs to the universal ribosomal protein uL29 family.

The protein is Large ribosomal subunit protein uL29 of Sphingopyxis alaskensis (strain DSM 13593 / LMG 18877 / RB2256) (Sphingomonas alaskensis).